An 88-amino-acid polypeptide reads, in one-letter code: uncharacterized protein (88 aa).

This is an uncharacterized protein from Sulfolobus islandicus filamentous virus (isolate Iceland/Hveragerdi) (SIFV).